The following is a 273-amino-acid chain: Eukaryotic translation initiation factor 3 subunit G-2 (273 aa).

The tract at residues 165–193 is disordered; sequence KYVPPFMKDGGGGPGGKNWGRGRERDDSS. Residues 173 to 183 show a composition bias toward gly residues; the sequence is DGGGGPGGKNW. An RRM domain is found at 193–271; sequence SAVRISNLSE…LILCVEWSKP (79 aa).

It belongs to the eIF-3 subunit G family. Component of the eukaryotic translation initiation factor 3 (eIF-3) complex. The eIF-3 complex interacts with pix.

The protein resides in the cytoplasm. Functionally, RNA-binding component of the eukaryotic translation initiation factor 3 (eIF-3) complex, which is involved in protein synthesis of a specialized repertoire of mRNAs and, together with other initiation factors, stimulates binding of mRNA and methionyl-tRNAi to the 40S ribosome. The eIF-3 complex specifically targets and initiates translation of a subset of mRNAs involved in cell proliferation. This subunit can bind 18S rRNA. The polypeptide is Eukaryotic translation initiation factor 3 subunit G-2 (Drosophila yakuba (Fruit fly)).